Reading from the N-terminus, the 1073-residue chain is Guanylyl cyclase C (1073 aa).

An N-terminal signal peptide occupies residues 1-23; the sequence is MKTLLLDLALWSLLFQPGWLSFS. Topologically, residues 24 to 430 are extracellular; the sequence is SQVSQNCHNG…PNDITGRGPQ (407 aa). N-linked (GlcNAc...) asparagine glycans are attached at residues asparagine 32, asparagine 75, asparagine 79, asparagine 195, asparagine 284, asparagine 307, asparagine 345, and asparagine 402. The helical transmembrane segment at 431-454 threads the bilayer; it reads ILMIAVFTLTGAVVLLLLVALLML. Residues 455–1073 are Cytoplasmic-facing; sequence RKYRKDYELR…NTTDKESTYF (619 aa). The Protein kinase domain occupies 489 to 749; sequence LKIDDDKRRD…KIETTLAKIF (261 aa). Residues 824 to 954 enclose the Guanylate cyclase domain; sequence TIYFSDIVGF…DTVNTASRME (131 aa).

Belongs to the adenylyl cyclase class-4/guanylyl cyclase family. Homotrimer. Interacts via its C-terminal region with NHERF4. Interacts with the lectin chaperone VIP36. In terms of processing, glycosylation at Asn-75 and/or Asn-79 is required for interaction with VIP36 while glycosylation at Asn-345 and Asn-402 modulates ligand-mediated GUCY2C activation.

It localises to the cell membrane. It is found in the endoplasmic reticulum membrane. The catalysed reaction is GTP = 3',5'-cyclic GMP + diphosphate. Functionally, guanylyl cyclase that catalyzes synthesis of cyclic GMP (cGMP) from GTP. Receptor for the E.coli heat-stable enterotoxin; E.coli enterotoxin markedly stimulates the accumulation of cGMP in mammalian cells expressing GUCY2C. Also activated by the endogenous peptides guanylin and uroguanylin. This chain is Guanylyl cyclase C, found in Homo sapiens (Human).